Here is a 382-residue protein sequence, read N- to C-terminus: Pyrimidine monooxygenase RutA (382 aa).

FMN is bound by residues 68 to 69 (IK), N134, E143, 159 to 160 (RY), and S209.

This sequence belongs to the NtaA/SnaA/DszA monooxygenase family. RutA subfamily.

It catalyses the reaction uracil + FMNH2 + NADH + O2 = (Z)-3-ureidoacrylate + FMN + NAD(+) + H2O + H(+). The enzyme catalyses thymine + FMNH2 + NADH + O2 = (Z)-2-methylureidoacrylate + FMN + NAD(+) + H2O + H(+). Functionally, catalyzes the pyrimidine ring opening between N-3 and C-4 by an unusual flavin hydroperoxide-catalyzed mechanism, adding oxygen atoms in the process to yield ureidoacrylate peracid, that immediately reacts with FMN forming ureidoacrylate and FMN-N(5)-oxide. The FMN-N(5)-oxide reacts spontaneously with NADH to produce FMN. Requires the flavin reductase RutF to regenerate FMN in vivo. This chain is Pyrimidine monooxygenase RutA (rutA), found in Escherichia coli O157:H7.